A 137-amino-acid chain; its full sequence is Phosphomevalonate dehydratase small subunit (137 aa).

The active-site Proton acceptor is the serine 62.

The protein belongs to the AcnX type II small subunit family. In terms of assembly, heterodimer composed of a large subunit (PMDh-L) and a small subunit (PMDh-S).

The enzyme catalyses (R)-5-phosphomevalonate = (2E)-3-methyl-5-phosphooxypent-2-enoate + H2O. The protein operates within isoprenoid biosynthesis; isopentenyl diphosphate biosynthesis via mevalonate pathway. Functionally, component of a hydro-lyase that catalyzes the dehydration of mevalonate 5-phosphate (MVA5P) to form trans-anhydromevalonate 5-phosphate (tAHMP). Involved in the archaeal mevalonate (MVA) pathway, which provides fundamental precursors for isoprenoid biosynthesis, such as isopentenyl diphosphate (IPP) and dimethylallyl diphosphate (DMAPP). The protein is Phosphomevalonate dehydratase small subunit of Methanothrix thermoacetophila (strain DSM 6194 / JCM 14653 / NBRC 101360 / PT) (Methanosaeta thermophila).